The primary structure comprises 94 residues: FXYD domain-containing ion transport regulator 6 (94 aa).

The first 17 residues, 1–17 (METVLVLCSLLAPVVLA), serve as a signal peptide directing secretion. Residues 18-34 (SAAEKEKEKDPFYYDYQ) are Extracellular-facing. A helical membrane pass occupies residues 35 to 57 (TLRIGGLVFAVVLFSVGILLILS). Residues 58–94 (RRCKCSFNQKPRAPGDEEAQVENLITTNAAEPQKAEN) are Cytoplasmic-facing.

Belongs to the FXYD family. As to quaternary structure, regulatory subunit of the sodium/potassium-transporting ATPase which is composed of a catalytic alpha subunit, a non-catalytic beta subunit and an additional regulatory subunit. The regulatory subunit, a member of the FXYD protein family, modulates the enzymatic activity in a tissue- and isoform-specific way by changing affinities of the Na+/K+-ATPase toward Na(+), K(+) or ATP.

The protein resides in the cell membrane. Its function is as follows. Associates with and regulates the activity of the sodium/potassium-transporting ATPase (NKA) which catalyzes the hydrolysis of ATP coupled with the exchange of Na(+) and K(+) ions across the plasma membrane. Reduces the apparent affinity for intracellular Na(+) with no change in the apparent affinity for extracellular K(+). In addition to modulating NKA kinetics, may also function as a regulator of NKA localization to the plasma membrane. This chain is FXYD domain-containing ion transport regulator 6 (Fxyd6), found in Mus musculus (Mouse).